A 262-amino-acid chain; its full sequence is Tryptophan synthase alpha chain (262 aa).

Residues E48 and D59 each act as proton acceptor in the active site.

This sequence belongs to the TrpA family. In terms of assembly, tetramer of two alpha and two beta chains.

The enzyme catalyses (1S,2R)-1-C-(indol-3-yl)glycerol 3-phosphate + L-serine = D-glyceraldehyde 3-phosphate + L-tryptophan + H2O. The protein operates within amino-acid biosynthesis; L-tryptophan biosynthesis; L-tryptophan from chorismate: step 5/5. In terms of biological role, the alpha subunit is responsible for the aldol cleavage of indoleglycerol phosphate to indole and glyceraldehyde 3-phosphate. The polypeptide is Tryptophan synthase alpha chain (Helicobacter pylori (strain Shi470)).